A 366-amino-acid chain; its full sequence is Phenylalanine--tRNA ligase alpha subunit (366 aa).

Glu-259 lines the Mg(2+) pocket.

It belongs to the class-II aminoacyl-tRNA synthetase family. Phe-tRNA synthetase alpha subunit type 1 subfamily. As to quaternary structure, tetramer of two alpha and two beta subunits. Mg(2+) is required as a cofactor.

It is found in the cytoplasm. It carries out the reaction tRNA(Phe) + L-phenylalanine + ATP = L-phenylalanyl-tRNA(Phe) + AMP + diphosphate + H(+). This chain is Phenylalanine--tRNA ligase alpha subunit, found in Novosphingobium aromaticivorans (strain ATCC 700278 / DSM 12444 / CCUG 56034 / CIP 105152 / NBRC 16084 / F199).